Here is a 219-residue protein sequence, read N- to C-terminus: uncharacterized protein (219 aa).

The next 2 helical transmembrane spans lie at 8–28 and 194–214; these read MILF…TLSV and GIPG…GLLF.

It is found in the cell membrane. This is an uncharacterized protein from Archaeoglobus fulgidus (strain ATCC 49558 / DSM 4304 / JCM 9628 / NBRC 100126 / VC-16).